A 134-amino-acid chain; its full sequence is MKAFSPVRSVRKNSLSDHSLGISRSKTPVDDPMSLLYNMNDCYSKLKELVPSIPQNKKVTKMEILQHVIDYILDLQIALDSHPTIVSLHHQRPGQNQASRTPLTTLNTDISILSLQASEFPSELMSNDSKVLCG.

S14 and S25 each carry phosphoserine. Residues 23–75 (SRSKTPVDDPMSLLYNMNDCYSKLKELVPSIPQNKKVTKMEILQHVIDYILDL) enclose the bHLH domain. The interval 30–83 (DDPMSLLYNMNDCYSKLKELVPSIPQNKKVTKMEILQHVIDYILDLQIALDSHP) is interaction with IFI204. The short motif at 106–115 (LNTDISILSL) is the Nuclear export signal element.

In terms of assembly, interacts with GATA4 and NKX2-5. Interacts with NR0B2. Interacts with CLOCK and BMAL1. Interacts with IFI204. Interacts with NEDD9/HEF1. Interacts with ASB4; this interaction promotes ID2 proteasomal degradation. Post-translationally, polyubiquitinated; which is favored by Ifi204 and leads to proteasomal degradation. Ubiquitinated in a ASB4-depedent manner, leading to proteasomal degradation. In terms of processing, phosphorylated in vitro by CDK1, PKA and PKC.

The protein localises to the cytoplasm. The protein resides in the nucleus. Transcriptional regulator (lacking a basic DNA binding domain) which negatively regulates the basic helix-loop-helix (bHLH) transcription factors by forming heterodimers and inhibiting their DNA binding and transcriptional activity. Implicated in regulating a variety of cellular processes, including cellular growth, senescence, differentiation, apoptosis, angiogenesis, and neoplastic transformation. Inhibits skeletal muscle and cardiac myocyte differentiation. Regulates the circadian clock by repressing the transcriptional activator activity of the CLOCK-BMAL1 heterodimer. Restricts the CLOCK and BMAL1 localization to the cytoplasm. Plays a role in both the input and output pathways of the circadian clock: in the input component, is involved in modulating the magnitude of photic entrainment and in the output component, contributes to the regulation of a variety of liver clock-controlled genes involved in lipid metabolism. The polypeptide is DNA-binding protein inhibitor ID-2 (Id2) (Mus musculus (Mouse)).